The primary structure comprises 128 residues: Large ribosomal subunit protein bL17 (128 aa).

This sequence belongs to the bacterial ribosomal protein bL17 family. In terms of assembly, part of the 50S ribosomal subunit. Contacts protein L32.

The protein is Large ribosomal subunit protein bL17 of Erwinia tasmaniensis (strain DSM 17950 / CFBP 7177 / CIP 109463 / NCPPB 4357 / Et1/99).